We begin with the raw amino-acid sequence, 1004 residues long: Bifunctional glutamine synthetase adenylyltransferase/adenylyl-removing enzyme (1004 aa).

An adenylyl removase region spans residues 1–496; that stretch reads MVRPPSARSA…LHAKLFYRPL (496 aa). The interval 502 to 1004 is adenylyl transferase; sequence RMDPDALRLS…RAVVERVFGS (503 aa).

This sequence belongs to the GlnE family. Mg(2+) serves as cofactor.

The enzyme catalyses [glutamine synthetase]-O(4)-(5'-adenylyl)-L-tyrosine + phosphate = [glutamine synthetase]-L-tyrosine + ADP. The catalysed reaction is [glutamine synthetase]-L-tyrosine + ATP = [glutamine synthetase]-O(4)-(5'-adenylyl)-L-tyrosine + diphosphate. Functionally, involved in the regulation of glutamine synthetase GlnA, a key enzyme in the process to assimilate ammonia. When cellular nitrogen levels are high, the C-terminal adenylyl transferase (AT) inactivates GlnA by covalent transfer of an adenylyl group from ATP to specific tyrosine residue of GlnA, thus reducing its activity. Conversely, when nitrogen levels are low, the N-terminal adenylyl removase (AR) activates GlnA by removing the adenylyl group by phosphorolysis, increasing its activity. The regulatory region of GlnE binds the signal transduction protein PII (GlnB) which indicates the nitrogen status of the cell. The sequence is that of Bifunctional glutamine synthetase adenylyltransferase/adenylyl-removing enzyme from Nocardia farcinica (strain IFM 10152).